The chain runs to 588 residues: MRFSQLFVNTLKESPKDAVLKSHQYLIRGGFIQQIGSGIYNFLPLGKKLLDKVRFIVKEEMDKSGAQEILMGFVTPAELWRESGRYEQYGRELLRFVDRKENEFVLGPTHEEVITHIAKNTIKSYKQLPLHLYQIHSKFRDELRPRFGLMRGREFIMKDGYSFHSNYADLNREFDVMEATYKRILQRMGLEFKVVEADSGAIGGSGSKEFMVLAPCGEDTIVVCKGCEYGANIEASKRAPRTAPRPNEIKYDSNAPQAAFARFFTPDIKNIESLSAFFKVDKFWTIKAIVKKAIKANNESELVYFFVRGDDEGEETKMLNAINKHTNCYLALEDASVEEIQAAGLEVGFIGAYGLRHITQATHIYFDESLRDASNLICGANEKDYHFVGVDLSTFEGLEYADIAQSKEGDLCPKCAQELYYTKGIEVGHIFKLGDKYSRAMNAQFLDNDGKTQPLIMGCYGFGISRILPAILEQKSDDLGCIWSKEVSVFDIAIIISNTKDSVQNDFGSALYEILSACGIDVLLDERDERFGVKMKDFELLGFHSALIVGKGLNEGKVELIKREGLKKYELCATDKEILLEEILKIIA.

This sequence belongs to the class-II aminoacyl-tRNA synthetase family. ProS type 1 subfamily. As to quaternary structure, homodimer.

The protein resides in the cytoplasm. The catalysed reaction is tRNA(Pro) + L-proline + ATP = L-prolyl-tRNA(Pro) + AMP + diphosphate. In terms of biological role, catalyzes the attachment of proline to tRNA(Pro) in a two-step reaction: proline is first activated by ATP to form Pro-AMP and then transferred to the acceptor end of tRNA(Pro). As ProRS can inadvertently accommodate and process non-cognate amino acids such as alanine and cysteine, to avoid such errors it has two additional distinct editing activities against alanine. One activity is designated as 'pretransfer' editing and involves the tRNA(Pro)-independent hydrolysis of activated Ala-AMP. The other activity is designated 'posttransfer' editing and involves deacylation of mischarged Ala-tRNA(Pro). The misacylated Cys-tRNA(Pro) is not edited by ProRS. The sequence is that of Proline--tRNA ligase from Helicobacter hepaticus (strain ATCC 51449 / 3B1).